The following is a 714-amino-acid chain: Lipase maturation factor 2 (714 aa).

9 helical membrane passes run Leu11–Ile31, Met79–Leu99, Leu103–Phe125, Ser159–Val179, Phe221–Ile241, Ile257–Phe277, Thr304–Trp324, Val358–Leu378, and Ala398–Ile418. A glycan (N-linked (GlcNAc...) asparagine) is linked at Asn483. A helical membrane pass occupies residues Pro629 to Leu649. Basic residues predominate over residues Arg654 to Lys669. Positions Arg654 to Lys714 are disordered. Residues Arg683–Arg708 show a composition bias toward basic and acidic residues.

It belongs to the lipase maturation factor family.

It localises to the endoplasmic reticulum membrane. Involved in the maturation of specific proteins in the endoplasmic reticulum. May be required for maturation and transport of active lipoprotein lipase (LPL) through the secretory pathway. The polypeptide is Lipase maturation factor 2 (LMF2) (Gallus gallus (Chicken)).